A 286-amino-acid chain; its full sequence is 33 kDa chaperonin (286 aa).

Cystine bridges form between cysteine 225–cysteine 227 and cysteine 258–cysteine 261.

The protein belongs to the HSP33 family. In terms of processing, under oxidizing conditions two disulfide bonds are formed involving the reactive cysteines. Under reducing conditions zinc is bound to the reactive cysteines and the protein is inactive.

Its subcellular location is the cytoplasm. Its function is as follows. Redox regulated molecular chaperone. Protects both thermally unfolding and oxidatively damaged proteins from irreversible aggregation. Plays an important role in the bacterial defense system toward oxidative stress. This chain is 33 kDa chaperonin, found in Shewanella loihica (strain ATCC BAA-1088 / PV-4).